The chain runs to 2464 residues: Highly reducing polyketide synthase xilA (2464 aa).

Residues 9 to 437 form the Ketosynthase family 3 (KS3) domain; it reads HDPIALVGIG…GTNGHCIIDH (429 aa). Active-site for beta-ketoacyl synthase activity residues include C182, H318, and H360. A compositionally biased stretch (low complexity) spans 461 to 487; the sequence is QNGINGTNGTNGTNGTNGTNGTNGTNG. The tract at residues 461-495 is disordered; the sequence is QNGINGTNGTNGTNGTNGTNGTNGTNGHHNPKTEA. In terms of domain architecture, Malonyl-CoA:ACP transacylase (MAT) spans 589 to 911; it reads FIFTGQGAQW…LKRNEDAQRL (323 aa). The N-terminal hotdog fold stretch occupies residues 983-1121; the sequence is HDLLGSKVPG…GQIKIEVSTF (139 aa). In terms of domain architecture, PKS/mFAS DH spans 983-1286; sequence HDLLGSKVPG…FTSLNNEQES (304 aa). Catalysis depends on H1015, which acts as the Proton acceptor; for dehydratase activity. A C-terminal hotdog fold region spans residues 1133–1286; the sequence is GRLVDAQTWY…FTSLNNEQES (154 aa). D1199 acts as the Proton donor; for dehydratase activity in catalysis. Positions 1282–1490 are methyltransferase (CMeT) domain; that stretch reads NEQESTSTGD…TEPAHHSTIT (209 aa). One can recognise an Enoyl reductase (ER) domain in the interval 1716 to 2028; that stretch reads GILTSLYFKP…KGTHIGKMVI (313 aa). A Ketoreductase (KR) domain is found at 2052 to 2231; it reads ANYILVGGMS…ATTVSLGFIN (180 aa). Residues 2383-2461 form the Carrier domain; sequence ETVTFVTDAI…SIAQVIVEEA (79 aa). Position 2420 is an O-(pantetheine 4'-phosphoryl)serine (S2420).

The cofactor is pantetheine 4'-phosphate.

The protein operates within secondary metabolite biosynthesis. Its function is as follows. Highly reducing polyketide synthase; part of the gene cluster that mediates the biosynthesis of the 6-methyl-2-pyrone derivative xylariolide D. XilA produces the 5-alkyl-6-methyl-2-pyrone backbone called prexylariolide D via sequential condensations of 4 malonyl-CoA units with one acetyl-CoA starter unit. During the biosynthesis, the linear polyketide chain is branched by the addition of an acetyl unit as the origin of the methyl group at the 2-pyrone ring. Prexylariolide D is then hydroxylated at the side chain by xilC to form the final product, xylariolide D. The protein is Highly reducing polyketide synthase xilA of Penicillium rubens (strain ATCC 28089 / DSM 1075 / NRRL 1951 / Wisconsin 54-1255) (Penicillium chrysogenum).